The chain runs to 270 residues: 2-oxoglutarate synthase subunit KorB (270 aa).

In terms of assembly, heterotetramer of the KorA, KorB, KorC and KorD subunits.

The enzyme catalyses 2 oxidized [2Fe-2S]-[ferredoxin] + 2-oxoglutarate + CoA = succinyl-CoA + 2 reduced [2Fe-2S]-[ferredoxin] + CO2 + H(+). The chain is 2-oxoglutarate synthase subunit KorB (korB) from Methanocaldococcus jannaschii (strain ATCC 43067 / DSM 2661 / JAL-1 / JCM 10045 / NBRC 100440) (Methanococcus jannaschii).